Consider the following 155-residue polypeptide: Small ribosomal subunit protein uS9 (155 aa).

It belongs to the universal ribosomal protein uS9 family.

This is Small ribosomal subunit protein uS9 from Rhizobium etli (strain ATCC 51251 / DSM 11541 / JCM 21823 / NBRC 15573 / CFN 42).